A 1106-amino-acid chain; its full sequence is Carbamoyl phosphate synthase large chain (1106 aa).

Positions 1–402 (MPRREDIRSV…SFQKALRSLE (402 aa)) are carboxyphosphate synthetic domain. ATP-binding residues include Arg129, Arg169, Gly175, Gly176, Glu208, Val210, Glu215, Gly241, Val242, His243, Gln285, and Glu299. The ATP-grasp 1 domain occupies 133–328 (KKAMEKIGVR…IAKIAALLSI (196 aa)). The Mg(2+) site is built by Gln285, Glu299, and Asn301. Residues Gln285, Glu299, and Asn301 each coordinate Mn(2+). Positions 403-582 (IDRYGFGSDG…YSSYDEEDES (180 aa)) are oligomerization domain. The carbamoyl phosphate synthetic domain stretch occupies residues 583–964 (DVTNAKSVMI…AFLKSQYMAG (382 aa)). In terms of domain architecture, ATP-grasp 2 spans 707–898 (VEVLEKLKLN…IVKYATRIMM (192 aa)). The ATP site is built by Arg743, Ser782, Leu784, Glu789, Gly814, Ile815, His816, Ser817, Gln857, and Glu869. Residues Gln857, Glu869, and Asn871 each contribute to the Mg(2+) site. Residues Gln857, Glu869, and Asn871 each contribute to the Mn(2+) site. Positions 965–1106 (DELPSQGTVF…QEIHAMPKIL (142 aa)) constitute an MGS-like domain. The interval 965–1106 (DELPSQGTVF…QEIHAMPKIL (142 aa)) is allosteric domain.

The protein belongs to the CarB family. Composed of two chains; the small (or glutamine) chain promotes the hydrolysis of glutamine to ammonia, which is used by the large (or ammonia) chain to synthesize carbamoyl phosphate. Tetramer of heterodimers (alpha,beta)4. Requires Mg(2+) as cofactor. Mn(2+) is required as a cofactor.

It carries out the reaction hydrogencarbonate + L-glutamine + 2 ATP + H2O = carbamoyl phosphate + L-glutamate + 2 ADP + phosphate + 2 H(+). It catalyses the reaction hydrogencarbonate + NH4(+) + 2 ATP = carbamoyl phosphate + 2 ADP + phosphate + 2 H(+). Its pathway is amino-acid biosynthesis; L-arginine biosynthesis; carbamoyl phosphate from bicarbonate: step 1/1. It functions in the pathway pyrimidine metabolism; UMP biosynthesis via de novo pathway; (S)-dihydroorotate from bicarbonate: step 1/3. In terms of biological role, large subunit of the glutamine-dependent carbamoyl phosphate synthetase (CPSase). CPSase catalyzes the formation of carbamoyl phosphate from the ammonia moiety of glutamine, carbonate, and phosphate donated by ATP, constituting the first step of 2 biosynthetic pathways, one leading to arginine and/or urea and the other to pyrimidine nucleotides. The large subunit (synthetase) binds the substrates ammonia (free or transferred from glutamine from the small subunit), hydrogencarbonate and ATP and carries out an ATP-coupled ligase reaction, activating hydrogencarbonate by forming carboxy phosphate which reacts with ammonia to form carbamoyl phosphate. The protein is Carbamoyl phosphate synthase large chain of Leptospira interrogans serogroup Icterohaemorrhagiae serovar copenhageni (strain Fiocruz L1-130).